The sequence spans 479 residues: Aspartyl/glutamyl-tRNA(Asn/Gln) amidotransferase subunit B (479 aa).

This sequence belongs to the GatB/GatE family. GatB subfamily. Heterotrimer of A, B and C subunits.

It carries out the reaction L-glutamyl-tRNA(Gln) + L-glutamine + ATP + H2O = L-glutaminyl-tRNA(Gln) + L-glutamate + ADP + phosphate + H(+). It catalyses the reaction L-aspartyl-tRNA(Asn) + L-glutamine + ATP + H2O = L-asparaginyl-tRNA(Asn) + L-glutamate + ADP + phosphate + 2 H(+). Its function is as follows. Allows the formation of correctly charged Asn-tRNA(Asn) or Gln-tRNA(Gln) through the transamidation of misacylated Asp-tRNA(Asn) or Glu-tRNA(Gln) in organisms which lack either or both of asparaginyl-tRNA or glutaminyl-tRNA synthetases. The reaction takes place in the presence of glutamine and ATP through an activated phospho-Asp-tRNA(Asn) or phospho-Glu-tRNA(Gln). The chain is Aspartyl/glutamyl-tRNA(Asn/Gln) amidotransferase subunit B from Streptococcus pyogenes serotype M1.